The sequence spans 101 residues: Large ribosomal subunit protein uL23 (101 aa).

It belongs to the universal ribosomal protein uL23 family. Part of the 50S ribosomal subunit. Contacts protein L29, and trigger factor when it is bound to the ribosome.

In terms of biological role, one of the early assembly proteins it binds 23S rRNA. One of the proteins that surrounds the polypeptide exit tunnel on the outside of the ribosome. Forms the main docking site for trigger factor binding to the ribosome. In Corynebacterium diphtheriae (strain ATCC 700971 / NCTC 13129 / Biotype gravis), this protein is Large ribosomal subunit protein uL23.